Consider the following 304-residue polypeptide: MTRSEGDTWNLASSVGATATMVAAARAAATRRPRPVLTDEYAEPLVRAVGLDVFTKLASGELDPDDLERDVGFARMVDTFAARGRFYDDYFAAAGKAGLRQVVIVASGLDARPYRLSWPAGTTVYEIDQPEVIAFKTATLSRIGAAPTAELRTIGIDLRQDWPAALQDAGFDAAQPTAWLAEGVLIGFLPPEAEVRLLDSITPLSAEGSRFAADYGSLNDASQASTEQARRTTEGWRRRGLDMDIAALTYPGKHTDVAAHLGADGWATTTFGLADLFAAAGLPELTEAEQGPAATLSFVRAIKS.

S-adenosyl-L-methionine-binding positions include Asp128 and 157–158 (DL).

This sequence belongs to the UPF0677 family.

Exhibits S-adenosyl-L-methionine-dependent methyltransferase activity. The protein is Putative S-adenosyl-L-methionine-dependent methyltransferase MAV_1058 of Mycobacterium avium (strain 104).